The chain runs to 887 residues: Valine--tRNA ligase (887 aa).

The 'HIGH' region signature appears at 45-55 (PNVTGILHMGH). A 'KMSKS' region motif is present at residues 528-532 (KMSKS). Lysine 531 is a binding site for ATP. Residues 817-887 (TGLLNNEAEI…LKESLKSFEE (71 aa)) adopt a coiled-coil conformation.

The protein belongs to the class-I aminoacyl-tRNA synthetase family. ValS type 1 subfamily. In terms of assembly, monomer.

The protein resides in the cytoplasm. The enzyme catalyses tRNA(Val) + L-valine + ATP = L-valyl-tRNA(Val) + AMP + diphosphate. Catalyzes the attachment of valine to tRNA(Val). As ValRS can inadvertently accommodate and process structurally similar amino acids such as threonine, to avoid such errors, it has a 'posttransfer' editing activity that hydrolyzes mischarged Thr-tRNA(Val) in a tRNA-dependent manner. This Fusobacterium nucleatum subsp. nucleatum (strain ATCC 25586 / DSM 15643 / BCRC 10681 / CIP 101130 / JCM 8532 / KCTC 2640 / LMG 13131 / VPI 4355) protein is Valine--tRNA ligase.